A 673-amino-acid chain; its full sequence is Pesticin receptor (673 aa).

The N-terminal stretch at 1–22 (MKMTRLYPLALGGLLLPAIANA) is a signal peptide. A TonB box motif is present at residues 30–37 (STLEVTAS). Residues 41-155 (SRSASANNVS…QGGIINIVTQ (115 aa)) enclose the TBDR plug domain. The region spanning 160-672 (TPRGYIEGGV…TVGINTRIDF (513 aa)) is the TBDR beta-barrel domain. The TonB C-terminal box motif lies at 657-673 (QVNMGRTVGINTRIDFF).

It belongs to the TonB-dependent receptor family.

Its subcellular location is the cell outer membrane. Functionally, receptor for the bacteriocin pesticin and for the siderophore yersiniabactin. The sequence is that of Pesticin receptor (fyuA) from Yersinia enterocolitica.